Reading from the N-terminus, the 187-residue chain is Peptidyl-tRNA hydrolase (187 aa).

Tyr-18 provides a ligand contact to tRNA. His-23 functions as the Proton acceptor in the catalytic mechanism. The tRNA site is built by Phe-65, Asn-67, and Asn-113.

Belongs to the PTH family. Monomer.

It localises to the cytoplasm. The catalysed reaction is an N-acyl-L-alpha-aminoacyl-tRNA + H2O = an N-acyl-L-amino acid + a tRNA + H(+). Hydrolyzes ribosome-free peptidyl-tRNAs (with 1 or more amino acids incorporated), which drop off the ribosome during protein synthesis, or as a result of ribosome stalling. Functionally, catalyzes the release of premature peptidyl moieties from peptidyl-tRNA molecules trapped in stalled 50S ribosomal subunits, and thus maintains levels of free tRNAs and 50S ribosomes. The protein is Peptidyl-tRNA hydrolase of Coxiella burnetii (strain CbuG_Q212) (Coxiella burnetii (strain Q212)).